Reading from the N-terminus, the 281-residue chain is 2-dehydro-3-deoxyphosphooctonate aldolase (281 aa).

This sequence belongs to the KdsA family.

It is found in the cytoplasm. The enzyme catalyses D-arabinose 5-phosphate + phosphoenolpyruvate + H2O = 3-deoxy-alpha-D-manno-2-octulosonate-8-phosphate + phosphate. It functions in the pathway carbohydrate biosynthesis; 3-deoxy-D-manno-octulosonate biosynthesis; 3-deoxy-D-manno-octulosonate from D-ribulose 5-phosphate: step 2/3. It participates in bacterial outer membrane biogenesis; lipopolysaccharide biosynthesis. The sequence is that of 2-dehydro-3-deoxyphosphooctonate aldolase from Pseudomonas paraeruginosa (strain DSM 24068 / PA7) (Pseudomonas aeruginosa (strain PA7)).